A 343-amino-acid polypeptide reads, in one-letter code: 4-hydroxy-2-oxovalerate aldolase 2 (343 aa).

Residues 8 to 260 (ITVHDMSLRD…ETGVDVFAIS (253 aa)) enclose the Pyruvate carboxyltransferase domain. 16-17 (RD) is a substrate binding site. Aspartate 17 serves as a coordination point for Mn(2+). The Proton acceptor role is filled by histidine 20. Serine 170 and histidine 199 together coordinate substrate. Mn(2+) contacts are provided by histidine 199 and histidine 201. Tyrosine 290 lines the substrate pocket.

It belongs to the 4-hydroxy-2-oxovalerate aldolase family.

The enzyme catalyses (S)-4-hydroxy-2-oxopentanoate = acetaldehyde + pyruvate. The sequence is that of 4-hydroxy-2-oxovalerate aldolase 2 from Burkholderia lata (strain ATCC 17760 / DSM 23089 / LMG 22485 / NCIMB 9086 / R18194 / 383).